Reading from the N-terminus, the 213-residue chain is Orotate phosphoribosyltransferase (213 aa).

Lys-26 contacts 5-phospho-alpha-D-ribose 1-diphosphate. Residue 34–35 participates in orotate binding; the sequence is FF. 5-phospho-alpha-D-ribose 1-diphosphate contacts are provided by residues 72–73, Arg-99, Lys-100, Lys-103, His-105, and 124–132; these read YK and DDVITAGTA. Residues Thr-128 and Arg-156 each coordinate orotate.

It belongs to the purine/pyrimidine phosphoribosyltransferase family. PyrE subfamily. As to quaternary structure, homodimer. The cofactor is Mg(2+).

The catalysed reaction is orotidine 5'-phosphate + diphosphate = orotate + 5-phospho-alpha-D-ribose 1-diphosphate. It participates in pyrimidine metabolism; UMP biosynthesis via de novo pathway; UMP from orotate: step 1/2. Catalyzes the transfer of a ribosyl phosphate group from 5-phosphoribose 1-diphosphate to orotate, leading to the formation of orotidine monophosphate (OMP). The protein is Orotate phosphoribosyltransferase of Pseudomonas syringae pv. tomato (strain ATCC BAA-871 / DC3000).